The following is a 210-amino-acid chain: Large ribosomal subunit protein uL4 (210 aa).

The span at 44 to 54 shows a compositional bias: polar residues; sequence QRQGTASTLTR. Residues 44–96 are disordered; sequence QRQGTASTLTRSEVRGGGRKPYKQKGTGRARQGSIRTPLRPGGGVIFGPKPRS. A compositionally biased stretch (basic residues) spans 60–71; it reads GGRKPYKQKGTG.

This sequence belongs to the universal ribosomal protein uL4 family. In terms of assembly, part of the 50S ribosomal subunit.

Functionally, one of the primary rRNA binding proteins, this protein initially binds near the 5'-end of the 23S rRNA. It is important during the early stages of 50S assembly. It makes multiple contacts with different domains of the 23S rRNA in the assembled 50S subunit and ribosome. Its function is as follows. Forms part of the polypeptide exit tunnel. This Prochlorococcus marinus (strain MIT 9515) protein is Large ribosomal subunit protein uL4.